We begin with the raw amino-acid sequence, 440 residues long: MELRVGNKYRLGRKIGSGSFGDIYLGTTINTGEEVAIKLECIRTKHPQLHIESKFYKTMQGGIGIPRIIWCGSEGDYNVMVMELLGPSLEDLFNFCSRRFSLKTVLLLADQMISRIDYIHSRDFIHRDIKPDNFLMGLGKKGNLVYIIDFGLAKKFRDARSLKHIPYRENKNLTGTARYASINTHLGIEQSRRDDLESLGYVLMYFNLGALPWQGLKAANKRQKYERISEKKLSTSIVVLCKGFPSEFVNYLNFCRQMHFDQRPDYCHLRKLFRNLFHRLGFTYDYVFDWNLLKFGGPRNPQAIQQAQDGADGQAGHDAVAAAAAVAAAAAASSHQQQQHKVNAALGGGGGSAAQQQLQGGQTLAMLGGNGGGNGSQLIGGNGLNMDDSMAATNSSRPPYDTPERRPSIRMRQGGGGGGGGVGVGGMPSGGGGGGVGNAK.

Residues 9-277 (YRLGRKIGSG…HLRKLFRNLF (269 aa)) enclose the Protein kinase domain. Residues 15–23 (IGSGSFGDI) and Lys-38 each bind ATP. Asp-128 functions as the Proton acceptor in the catalytic mechanism. Residues 221–224 (KRQK) are nuclear localization signal; essential for interaction with Bdbt and important for nuclear localization. Residues Ser-333 and Ser-334 each carry the phosphoserine modification. The segment at 376–440 (SQLIGGNGLN…GGGGGVGNAK (65 aa)) is disordered. Residues 413–440 (QGGGGGGGGVGVGGMPSGGGGGGVGNAK) are compositionally biased toward gly residues.

Belongs to the protein kinase superfamily. CK1 Ser/Thr protein kinase family. Casein kinase I subfamily. As to quaternary structure, forms a complex with per. Interacts with Dlish. Interacts (via nuclear localization signal) with Bdbt. As to expression, detected in the head (at protein level). Expressed in photoreceptor cells of the eyes as well as in the region situated between the optic lobe and the central brain.

The protein resides in the nucleus. It localises to the cytoplasm. Its subcellular location is the cytosol. The catalysed reaction is L-seryl-[protein] + ATP = O-phospho-L-seryl-[protein] + ADP + H(+). It carries out the reaction L-threonyl-[protein] + ATP = O-phospho-L-threonyl-[protein] + ADP + H(+). Serine/threonine-protein kinase which is involved in the circadian rhythm pathway, viability and planar cell polarity. In the circadian rhythm pathway, phosphorylates the clock gene period (per) and targets it for degradation in the absence of timeless (tim), thus contributing to production of the circadian oscillations of the clock genes. Together with CkIalpha, regulates processing of ci by phosphorylating it, which promotes its binding to slmb, the F-box recognition component of the SCF(slmb) E3 ubiquitin-protein ligase. Involved in the inhibition of apoptosis during cell proliferation and growth arrest in imaginal disks. Also functions in planar cell polarity. The protein is Discs overgrown protein kinase (dco) of Drosophila melanogaster (Fruit fly).